The primary structure comprises 115 residues: Peptidyl-tRNA hydrolase (115 aa).

The protein belongs to the PTH2 family.

The protein localises to the cytoplasm. It carries out the reaction an N-acyl-L-alpha-aminoacyl-tRNA + H2O = an N-acyl-L-amino acid + a tRNA + H(+). The natural substrate for this enzyme may be peptidyl-tRNAs which drop off the ribosome during protein synthesis. In Archaeoglobus fulgidus (strain ATCC 49558 / DSM 4304 / JCM 9628 / NBRC 100126 / VC-16), this protein is Peptidyl-tRNA hydrolase.